A 335-amino-acid chain; its full sequence is 3-ketodihydrosphingosine reductase TSC10 (335 aa).

4 residues coordinate NADPH: G42, S44, S45, and G46. The short motif at 42–46 (GGSSG) is the GXSXG element. An NADP(+)-binding site is contributed by L47. Residues R67, D68, K71, D95, and L96 each coordinate NADPH. D95 contributes to the NADP(+) binding site. NADP(+) is bound by residues Y190, K194, and I223. Y190 functions as the Proton acceptor in the catalytic mechanism. The active-site Lowers pKa of active site Tyr is K194. A helical transmembrane segment spans residues 288–308 (TNNFLLDTLWLIVSSVGVPIW).

This sequence belongs to the short-chain dehydrogenases/reductases (SDR) family.

Its subcellular location is the endoplasmic reticulum membrane. The enzyme catalyses sphinganine + NADP(+) = 3-oxosphinganine + NADPH + H(+). Its pathway is lipid metabolism; sphingolipid metabolism. Catalyzes the reduction of 3'-oxosphinganine (3-ketodihydrosphingosine/KDS) to sphinganine (dihydrosphingosine/DHS), the second step of de novo sphingolipid biosynthesis. This is 3-ketodihydrosphingosine reductase TSC10 (TSC10) from Cryptococcus neoformans var. neoformans serotype D (strain B-3501A) (Filobasidiella neoformans).